The chain runs to 207 residues: Serotonin N-acetyltransferase (207 aa).

Residues 1–29 (MSTPSVHCLKPSPLHLPSGIPGSPGRQRR) are disordered. Residues 28 to 35 (RRHTLPAN) form a YWHAZ-binding region. Phosphothreonine; by PKA is present on T31. Residues 35–196 (NEFRCLTPED…TFTEMHCSLR (162 aa)) enclose the N-acetyltransferase domain. Residue L124 coordinates substrate. Residues 124–126 (LAV) and 132–137 (QQGKGS) contribute to the acetyl-CoA site. M159 lines the substrate pocket. 168-170 (YQR) contacts acetyl-CoA. S205 carries the post-translational modification Phosphoserine; by PKA.

This sequence belongs to the acetyltransferase family. AANAT subfamily. In terms of assembly, monomer. Interacts with several 14-3-3 proteins, including YWHAB, YWHAE, YWHAG and YWHAZ, preferentially when phosphorylated at Thr-31. Phosphorylation on Ser-205 also allows binding to YWHAZ, but with a 10-fold lower affinity. The interaction with YWHAZ considerably increases affinity for arylalkylamines and acetyl-CoA and protects the enzyme from dephosphorylation and proteasomal degradation. It may also prevent thiol-dependent inactivation. The physiological stoichiometry of the interaction is not clear. In vitro studies show either 1:2 (i.e. 1 AANAT molecule per YWHAZ dimer) or 2:2. Post-translationally, cAMP-dependent phosphorylation on both N-terminal Thr-31 and C-terminal Ser-205 regulates AANAT activity by promoting interaction with 14-3-3 proteins. In terms of tissue distribution, highest expression in the pineal gland, followed by retina. Expressed at much lower levels in brainstem and pituitary gland. AANAT activity also detected at low levels in the olfactory lobe.

The protein localises to the cytoplasm. It catalyses the reaction a 2-arylethylamine + acetyl-CoA = an N-acetyl-2-arylethylamine + CoA + H(+). The protein operates within aromatic compound metabolism; melatonin biosynthesis; melatonin from serotonin: step 1/2. Functionally, controls the night/day rhythm of melatonin production in the pineal gland. Catalyzes the N-acetylation of serotonin into N-acetylserotonin, the penultimate step in the synthesis of melatonin. This is Serotonin N-acetyltransferase (AANAT) from Ovis aries (Sheep).